Reading from the N-terminus, the 208-residue chain is Glutathione S-transferase 1 (208 aa).

Residues Met-1–Asp-80 form the GST N-terminal domain. Residues Ser-9, His-50 to Ile-52, and Glu-64 to Arg-66 each bind glutathione. The 122-residue stretch at Cys-86 to Phe-207 folds into the GST C-terminal domain.

This sequence belongs to the GST superfamily. Theta family. In terms of assembly, homodimer.

The enzyme catalyses RX + glutathione = an S-substituted glutathione + a halide anion + H(+). In terms of biological role, conjugation of reduced glutathione to a wide number of exogenous and endogenous hydrophobic electrophiles. This chain is Glutathione S-transferase 1 (Gst1), found in Musca domestica (House fly).